The chain runs to 180 residues: D-glycero-beta-D-manno-heptose-1,7-bisphosphate 7-phosphatase (180 aa).

Residue Asp14 is the Nucleophile of the active site. Residues Asp14 and Asp16 each coordinate Mg(2+). Substrate-binding positions include 14 to 16, 22 to 25, and 56 to 59; these read DRD, NDHY, and TNQS. Catalysis depends on Asp16, which acts as the Proton donor. Cys95, His97, Cys110, and His112 together coordinate Zn(2+). 113-114 lines the substrate pocket; that stretch reads RK. A Mg(2+)-binding site is contributed by Asp139.

This sequence belongs to the gmhB family. In terms of assembly, monomer. Mg(2+) is required as a cofactor.

Its subcellular location is the cytoplasm. It carries out the reaction D-glycero-beta-D-manno-heptose 1,7-bisphosphate + H2O = D-glycero-beta-D-manno-heptose 1-phosphate + phosphate. The protein operates within nucleotide-sugar biosynthesis; ADP-L-glycero-beta-D-manno-heptose biosynthesis; ADP-L-glycero-beta-D-manno-heptose from D-glycero-beta-D-manno-heptose 7-phosphate: step 2/4. It participates in bacterial outer membrane biogenesis; LPS core biosynthesis. Its function is as follows. Converts the D-glycero-beta-D-manno-heptose 1,7-bisphosphate (beta-HBP) intermediate into D-glycero-beta-D-manno-heptose 1-phosphate by removing the phosphate group at the C-7 position. Also catalyzes the dephosphorylation of D-glycero-alpha-D-manno-heptose 1,7-bisphosphate in vitro. This is D-glycero-beta-D-manno-heptose-1,7-bisphosphate 7-phosphatase from Rhodopseudomonas palustris (strain ATCC BAA-98 / CGA009).